Reading from the N-terminus, the 321-residue chain is PI-PLC X domain-containing protein 3 (321 aa).

The PI-PLC X-box domain occupies 22–197 (SIHSIPLTNL…DYQVLVFYHS (176 aa)). Catalysis depends on residues histidine 37 and histidine 114.

The protein is PI-PLC X domain-containing protein 3 (PLCXD3) of Bos taurus (Bovine).